A 1211-amino-acid polypeptide reads, in one-letter code: PH domain-containing protein DDB_G0287875 (1211 aa).

The 86-residue stretch at 5 to 90 (QKKILKVFDQ…YKFFFLNPNG (86 aa)) folds into the Ras-associating 1 domain. Positions 103–112 (KSQSASTSGS) are enriched in polar residues. Residues 103–133 (KSQSASTSGSAPPKKEPPKPQELQQKQHISK) are disordered. A PH domain is found at 132 to 223 (SKGKSGWLLR…WAQELQATMN (92 aa)). 2 Calponin-homology (CH) domains span residues 277–384 (TTLV…VGYF) and 392–502 (FNMR…LSGQ). Disordered stretches follow at residues 520–941 (VEPE…TESV) and 973–1110 (TSAT…PKNT). A coiled-coil region spans residues 527 to 572 (SIRDKQLKLMREKKEEEDRLKKEKEEKEKEEKEKLEKESSAAAAAT). Residues 528-565 (IRDKQLKLMREKKEEEDRLKKEKEEKEKEEKEKLEKES) are compositionally biased toward basic and acidic residues. Low complexity-rich tracts occupy residues 566–596 (SAAA…PLKK), 607–646 (PPTV…TLTP), 655–668 (KKPA…KPVA), and 676–691 (PSSS…TTPS). Basic and acidic residues predominate over residues 703–729 (QLEKEKQDRLEKARLEKEKAEKEEQEF). The stretch at 703–847 (QLEKEKQDRL…ERKHDENDMD (145 aa)) forms a coiled coil. Positions 744-753 (LLEQQKQQQE) are enriched in low complexity. 2 stretches are compositionally biased toward basic and acidic residues: residues 754 to 778 (GQER…QRQI) and 786 to 853 (EARI…KLLE). The segment covering 862-877 (PTITPPQSLHSSQIIR) has biased composition (polar residues). Residues 880 to 909 (IEEDDQTNSELEMFQNEYNRLQDEEEHINS) are a coiled coil. Composition is skewed to low complexity over residues 914–936 (GSSG…GASS) and 976–1010 (TTSD…TNNN). The segment covering 1032 to 1048 (TKEQQSIIDKQTGLVSK) has biased composition (polar residues). A coiled-coil region spans residues 1048-1076 (KQSTNNESNEQQQQQQQQQQLQQQQSSQN). Residues 1049 to 1083 (QSTNNESNEQQQQQQQQQQLQQQQSSQNSTTSIST) show a composition bias toward low complexity. A compositionally biased stretch (basic and acidic residues) spans 1093–1104 (NEEKEKESEPHK). The Ras-associating 2 domain maps to 1112–1196 (GRVVVRICLE…DRFVFKKNDI (85 aa)).

In Dictyostelium discoideum (Social amoeba), this protein is PH domain-containing protein DDB_G0287875.